A 166-amino-acid chain; its full sequence is KH homology domain-containing protein 1C (166 aa).

Residues 19–78 (PLVFDMEEDKEDYIFGPHDEYLHTLEVHSNTLIQLERWFTPTGQTRVTVVGPLKARLWVM) form the KH; atypical domain.

Belongs to the KHDC1 family.

The chain is KH homology domain-containing protein 1C (Khdc1c) from Mus musculus (Mouse).